The following is a 1088-amino-acid chain: RNA-directed RNA polymerase (1088 aa).

The region spanning 501-687 (LSYGDVTRFL…AKRYIAGGKI (187 aa)) is the RdRp catalytic domain.

This sequence belongs to the reoviridae RNA-directed RNA polymerase family. As to quaternary structure, interacts with VP3 (Potential). Interacts with VP2; this interaction activates VP1. Interacts with NSP5; this interaction is probably necessary for the formation of functional virus factories. Interacts with NSP2; this interaction is weak. Mg(2+) is required as a cofactor.

It localises to the virion. It catalyses the reaction RNA(n) + a ribonucleoside 5'-triphosphate = RNA(n+1) + diphosphate. RNA-directed RNA polymerase that is involved in both transcription and genome replication. Together with VP3 capping enzyme, forms an enzyme complex positioned near the channels situated at each of the five-fold vertices of the core. Following infection, the outermost layer of the virus is lost, leaving a double-layered particle (DLP) made up of the core and VP6 shell. VP1 then catalyzes the transcription of fully conservative plus-strand genomic RNAs that are extruded through the DLP's channels into the cytoplasm where they function as mRNAs for translation of viral proteins. One copy of each of the viral (+)RNAs is also recruited during core assembly, together with newly synthesized polymerase complexes and VP2. The polymerase of these novo-formed particles catalyzes the synthesis of complementary minus-strands leading to dsRNA formation. To do so, the polymerase specifically recognizes and binds 4 bases 5'-UGUG-3' in the conserved 3'-sequence of plus-strand RNA templates. VP2 presumably activates the autoinhibited VP1-RNA complex to coordinate packaging and genome replication. Once dsRNA synthesis is complete, the polymerase switches to the transcriptional mode, thus providing secondary transcription. The protein is RNA-directed RNA polymerase of Bos taurus (Bovine).